We begin with the raw amino-acid sequence, 362 residues long: sn-glycerol-3-phosphate import ATP-binding protein UgpC (362 aa).

Positions 4 to 235 constitute an ABC transporter domain; the sequence is LSFRNVKKTY…PASTFVAGFI (232 aa). 37-44 contacts ATP; it reads GPSGCGKS.

Belongs to the ABC transporter superfamily. sn-glycerol-3-phosphate importer (TC 3.A.1.1.3) family. In terms of assembly, the complex is composed of two ATP-binding proteins (UgpC), two transmembrane proteins (UgpA and UgpE) and a solute-binding protein (UgpB).

Its subcellular location is the cell inner membrane. It catalyses the reaction sn-glycerol 3-phosphate(out) + ATP + H2O = sn-glycerol 3-phosphate(in) + ADP + phosphate + H(+). Its function is as follows. Part of the ABC transporter complex UgpBAEC involved in sn-glycerol-3-phosphate (G3P) import. Responsible for energy coupling to the transport system. The chain is sn-glycerol-3-phosphate import ATP-binding protein UgpC from Bordetella parapertussis (strain 12822 / ATCC BAA-587 / NCTC 13253).